The sequence spans 499 residues: Putative DUF21 domain-containing protein At1g03270 (499 aa).

Residues 1–32 lie on the Extracellular side of the membrane; that stretch reads MVVLSTLALVRAAYSLNSFVFEAEDIRFGSPW. The region spanning 29–211 is the CNNM transmembrane domain; sequence GSPWWFVVVG…GKGGELTHEE (183 aa). A helical transmembrane segment spans residues 33–53; the sequence is WFVVVGVACFLVLFAGIMSGL. The Cytoplasmic portion of the chain corresponds to 54 to 91; it reads TLGLMSLGLVELEILQQSGSSAEKKQAAAILPVVKKQH. A helical transmembrane segment spans residues 92-112; that stretch reads QLLVTLLLCNAAAMEALPICL. Residues 113 to 114 lie on the Extracellular side of the membrane; it reads DK. The chain crosses the membrane as a helical span at residues 115–135; it reads IFHPFVAVLLSVTFVLAFGEI. Over 136–145 the chain is Cytoplasmic; the sequence is IPQAICSRYG. The chain crosses the membrane as a helical span at residues 146–166; that stretch reads LAVGANFLWLVRILMIICYPI. Residues 167–499 lie on the Extracellular side of the membrane; that stretch reads AYPIGKVLDA…TEPLLAESDR (333 aa). Asparagine 181 carries an N-linked (GlcNAc...) asparagine glycan. CBS domains are found at residues 230 to 291, 295 to 359, and 365 to 431; these read MTPI…EAPV, SIRK…SNLT, and HESH…IVDE. N-linked (GlcNAc...) asparagine glycosylation is found at asparagine 357, asparagine 391, and asparagine 484.

The protein resides in the membrane. The protein is Putative DUF21 domain-containing protein At1g03270 (CBSDUF4) of Arabidopsis thaliana (Mouse-ear cress).